Consider the following 414-residue polypeptide: Protein RecA (414 aa).

78–85 provides a ligand contact to ATP; sequence GPESSGKT. Basic and acidic residues predominate over residues 361 to 384; the sequence is QEKAVEALKKEEGSKEDALTGNKD. The segment at 361–414 is disordered; it reads QEKAVEALKKEEGSKEDALTGNKDETDDSAQKNSAASKAKRAEVVGLPADDSLF.

This sequence belongs to the RecA family.

The protein localises to the cytoplasm. Can catalyze the hydrolysis of ATP in the presence of single-stranded DNA, the ATP-dependent uptake of single-stranded DNA by duplex DNA, and the ATP-dependent hybridization of homologous single-stranded DNAs. It interacts with LexA causing its activation and leading to its autocatalytic cleavage. This chain is Protein RecA, found in Treponema denticola (strain ATCC 35405 / DSM 14222 / CIP 103919 / JCM 8153 / KCTC 15104).